Consider the following 411-residue polypeptide: Tyrosine--tRNA ligase (411 aa).

Position 34 (Tyr-34) interacts with L-tyrosine. The 'HIGH' region signature appears at 39 to 48 (CTATSLHIGS). L-tyrosine-binding residues include Tyr-171 and Gln-175. A 'KMSKS' region motif is present at residues 231 to 235 (KMGKT). Lys-234 provides a ligand contact to ATP. The S4 RNA-binding domain maps to 345 to 411 (ISAYELFHEA…GKKRHILVRV (67 aa)).

Belongs to the class-I aminoacyl-tRNA synthetase family. TyrS type 1 subfamily. Homodimer.

The protein resides in the cytoplasm. It catalyses the reaction tRNA(Tyr) + L-tyrosine + ATP = L-tyrosyl-tRNA(Tyr) + AMP + diphosphate + H(+). Catalyzes the attachment of tyrosine to tRNA(Tyr) in a two-step reaction: tyrosine is first activated by ATP to form Tyr-AMP and then transferred to the acceptor end of tRNA(Tyr). The protein is Tyrosine--tRNA ligase of Rickettsia peacockii (strain Rustic).